The primary structure comprises 1088 residues: MGKYNLILSEYLSFVYNSQSAVQIPIYYSSNPELEKRCIDFHAKCVDNSKKGLSLKPLFEEYKDVIDNATLLSILSYSYDKYNAVERKLVNYAKGKPLEADLTANELDYENNKITSELFQSAKEYTYSLMDPAILTSLSSNLNAVMFWLERHSNDVADANKIYKRRLDLFTIVASTINKYGVPRHNEKYRYEYEVMKDKPYYLVTWANSAIEMLMSVFSHEDYLIAKELMVLSCSNRSTLAKLVSSPMSILVALIDINGTFITNEEFDLEFSDKYVRAIVPDQTFDELQEMIDNMKKAGLVDIPRMIQEWLVDCSLEKFTLMSKIYSWSFHVGFRKQKMIDAALDQLKTEYTEDVDNEMYNEYTMLIRDEIVKMLEVPVKHDDHLLRNSELAGLLSMSSASNGASRQLKFGRKTIFSTKKNMHVMDDIARGRYTPGVIPPVNVDRPIPLGRRDVPGRRTRIIFILPYEYFIAQHAVVEKMLSYAKHTREYAEFYSQSNQLLSYGDVTRFLSSNSMVLYTDVSQWDSSQHNTQPFRKGIIMGLDMLANMTNDPKVVQTLNLYKQTQINLMDSYVQIPDGDVIKKIQYGAVASGEKQTKAANSIANLALIKTVLSRIANKYSFITKIIRVDGDDNYAVLQFNTDVTKQMVQEVSNDVRYIYSRMNAKVKALVSTVGIEIAKRYIAGGKIFFRAGINLLNNEKRGQSTQWDQAAILYSNYIVNKLRGFETDREFILTKIIQMTSVAITGSLRLFPSERVLTTNSTFKVFDSEDFIIEYGTTDDEVYIQRAFMSLSSQKSGIADEIASSQTFKNYVSKLSDQLLVSKNAIVSKGIAVTEKAKLNSYAPVYLEKRRAQISALLTMLQKPVSFKSNKITINDILRDIKPFFVTTEASLPIQYRKFMPTLPDNVQYVIQCIGSRTYQIEDSGSKSSISKLISKYSVYKPSIEELYRVISLREQEIQLYLVSLGVPPVDASTYVGSRIYSQDKYKILESYVYNLLSINYGCYQLFDFNSPDLEKLIRIPFKGKIPAVTFILHLYAKLEIINYAIKNKSWISLFCNYPKSEMIKLWKKMWNITAFRSPYTSANFFED.

The RdRp catalytic domain occupies 501–687 (LSYGDVTRFL…AKRYIAGGKI (187 aa)).

The protein belongs to the reoviridae RNA-directed RNA polymerase family. As to quaternary structure, interacts with VP3 (Potential). Interacts with VP2; this interaction activates VP1. Interacts with NSP5; this interaction is probably necessary for the formation of functional virus factories. Interacts with NSP2; this interaction is weak. It depends on Mg(2+) as a cofactor.

The protein localises to the virion. The enzyme catalyses RNA(n) + a ribonucleoside 5'-triphosphate = RNA(n+1) + diphosphate. Functionally, RNA-directed RNA polymerase that is involved in both transcription and genome replication. Together with VP3 capping enzyme, forms an enzyme complex positioned near the channels situated at each of the five-fold vertices of the core. Following infection, the outermost layer of the virus is lost, leaving a double-layered particle (DLP) made up of the core and VP6 shell. VP1 then catalyzes the transcription of fully conservative plus-strand genomic RNAs that are extruded through the DLP's channels into the cytoplasm where they function as mRNAs for translation of viral proteins. One copy of each of the viral (+)RNAs is also recruited during core assembly, together with newly synthesized polymerase complexes and VP2. The polymerase of these novo-formed particles catalyzes the synthesis of complementary minus-strands leading to dsRNA formation. To do so, the polymerase specifically recognizes and binds 4 bases 5'-UGUG-3' in the conserved 3'-sequence of plus-strand RNA templates. VP2 presumably activates the autoinhibited VP1-RNA complex to coordinate packaging and genome replication. Once dsRNA synthesis is complete, the polymerase switches to the transcriptional mode, thus providing secondary transcription. This Rotavirus A (strain RVA/Pig/United States/Gottfried/1983/G4P2B[6]) (RV-A) protein is RNA-directed RNA polymerase.